The following is a 466-amino-acid chain: Phosphomethylpyrimidine synthase (466 aa).

Substrate contacts are provided by residues asparagine 80, methionine 109, tyrosine 139, histidine 175, 195–197, 236–239, and glutamate 275; these read SRG and DSLR. Histidine 279 contacts Zn(2+). A substrate-binding site is contributed by tyrosine 302. Histidine 343 is a Zn(2+) binding site. Residues cysteine 423, cysteine 426, and cysteine 431 each contribute to the [4Fe-4S] cluster site.

The protein belongs to the ThiC family. [4Fe-4S] cluster is required as a cofactor.

It carries out the reaction 5-amino-1-(5-phospho-beta-D-ribosyl)imidazole + S-adenosyl-L-methionine = 4-amino-2-methyl-5-(phosphooxymethyl)pyrimidine + CO + 5'-deoxyadenosine + formate + L-methionine + 3 H(+). Its pathway is cofactor biosynthesis; thiamine diphosphate biosynthesis. Functionally, catalyzes the synthesis of the hydroxymethylpyrimidine phosphate (HMP-P) moiety of thiamine from aminoimidazole ribotide (AIR) in a radical S-adenosyl-L-methionine (SAM)-dependent reaction. The chain is Phosphomethylpyrimidine synthase from Synechococcus sp. (strain RCC307).